The primary structure comprises 613 residues: Epsin-2 (613 aa).

Residues 11–143 (NMMKGYSSTQ…NDEERLREER (133 aa)) form the ENTH domain. 3 disordered regions span residues 140–208 (REER…DDED), 323–351 (TAANMQQQQQQPADFQQPLPTGSNNPFSM), and 356–375 (RQKQEQQHAQLQRQQEEARQ). Basic residues predominate over residues 148–167 (RNRRANRAARPRPRRQRTRS). Threonine 165 is modified (phosphothreonine). Serine 167 carries the phosphoserine modification. UIM domains follow at residues 175 to 194 (SYQDDLEKALEESRITAQED) and 206 to 225 (DEDPDFQAALQLSKEEEELK). Basic and acidic residues predominate over residues 179 to 188 (DLEKALEESR). Residues 323-339 (TAANMQQQQQQPADFQQ) show a composition bias toward low complexity. A compositionally biased stretch (polar residues) spans 340 to 350 (PLPTGSNNPFS). Lysine 426 is covalently cross-linked (Glycyl lysine isopeptide (Lys-Gly) (interchain with G-Cter in ubiquitin)). Threonine 430 is subject to Phosphothreonine. At serine 434 the chain carries Phosphoserine. Threonine 450, threonine 468, and threonine 470 each carry phosphothreonine. A compositionally biased stretch (polar residues) spans 471–512 (GTFINSQGTGYKQVTNEPKNNPFLSNQYTGLPSTNIVPTQTG). The interval 471–613 (GTFINSQGTG…PDQGVSLIDL (143 aa)) is disordered. Residues 526-600 (SPQQNPTGIS…QQQQQQQQQQ (75 aa)) show a composition bias toward low complexity.

This sequence belongs to the epsin family. Phosphorylated by PRK1.

It is found in the cytoplasm. The protein localises to the membrane. Functionally, binds to membranes enriched in phosphatidylinositol 3,5-bisphosphate (PtdIns(3,5)P2) and phosphatidylinositol 4,5-bisphosphate (PtdIns(4,5)P2). Required for endocytosis and localization of actin. This chain is Epsin-2 (ENT2), found in Saccharomyces cerevisiae (strain ATCC 204508 / S288c) (Baker's yeast).